Here is a 120-residue protein sequence, read N- to C-terminus: Secreted RxLR effector protein RXLR-C26 (120 aa).

The first 29 residues, 1 to 29 (MTGILCFPPFARFFMLLSGCAWLAGVSSG), serve as a signal peptide directing secretion. Positions 57 to 77 (RNLRGHINSAIIEANDTSEER) match the RxLR-dEER motif. N71 carries N-linked (GlcNAc...) asparagine glycosylation.

It belongs to the RxLR effector family.

Its subcellular location is the secreted. The protein resides in the host cytoplasm. The protein localises to the host nucleus. Its function is as follows. Secreted effector that does not suppress pattern-triggered immunity (PTI) in plant host. This Plasmopara halstedii (Downy mildew of sunflower) protein is Secreted RxLR effector protein RXLR-C26.